We begin with the raw amino-acid sequence, 298 residues long: MAAITASMVAELRGKTDAPMMECKKALTEADGDMAKAEELLRVKLGTKAGKAASRVTAEGVVASFINGNVGALIEVNSETDFVSKNDSFIAMANAAAKLVAEHNPADIEALGQLAYEQDGFGPTLEDVRKGLIGKIGENMSFRRFKRFSGSNLAAYLHGSRIGVVVEFDGDAVAAKDVAMHVAAMKPVALTSADVPADLIAKERAVAEGKAAESGKPADIAAKMVEGSVQKYLKEVSLADQVFVKAADGKQTVAQMLKAANTTVKGFTLYVVGEGIEKKVDDFAAEVAAQVAAAKSGA.

An involved in Mg(2+) ion dislocation from EF-Tu region spans residues 80–83 (TDFV).

The protein belongs to the EF-Ts family.

It is found in the cytoplasm. Associates with the EF-Tu.GDP complex and induces the exchange of GDP to GTP. It remains bound to the aminoacyl-tRNA.EF-Tu.GTP complex up to the GTP hydrolysis stage on the ribosome. In Acidovorax sp. (strain JS42), this protein is Elongation factor Ts.